The chain runs to 94 residues: Trp operon repressor homolog (94 aa).

Residues 58 to 81 (QREIAEKYGVSIAQITRGSNALKG) mediate DNA binding.

It belongs to the TrpR family. Homodimer.

It is found in the cytoplasm. Its function is as follows. This protein is an aporepressor. When complexed with L-tryptophan it binds the operator region of the trp operon and prevents the initiation of transcription. The chain is Trp operon repressor homolog from Chlamydia trachomatis serovar A (strain ATCC VR-571B / DSM 19440 / HAR-13).